A 467-amino-acid chain; its full sequence is Xanthan biosynthesis protein XanB (467 aa).

Belongs to the mannose-6-phosphate isomerase type 2 family.

The catalysed reaction is D-mannose 6-phosphate = D-fructose 6-phosphate. It carries out the reaction alpha-D-mannose 1-phosphate + GTP + H(+) = GDP-alpha-D-mannose + diphosphate. The protein operates within nucleotide-sugar biosynthesis; GDP-alpha-D-mannose biosynthesis; GDP-alpha-D-mannose from alpha-D-mannose 1-phosphate (GTP route): step 1/1. It participates in nucleotide-sugar biosynthesis; GDP-alpha-D-mannose biosynthesis; alpha-D-mannose 1-phosphate from D-fructose 6-phosphate: step 1/2. In terms of biological role, involved in xanthan production. The polypeptide is Xanthan biosynthesis protein XanB (xanB) (Xanthomonas campestris pv. campestris (strain B100)).